Reading from the N-terminus, the 437-residue chain is Ribosomal protein uS12 methylthiotransferase RimO (437 aa).

Residues Pro-4–Pro-114 enclose the MTTase N-terminal domain. 6 residues coordinate [4Fe-4S] cluster: Cys-13, Cys-49, Cys-78, Cys-145, Cys-149, and Cys-152. Positions Leu-131–Asn-369 constitute a Radical SAM core domain. In terms of domain architecture, TRAM spans Lys-372–Val-437.

The protein belongs to the methylthiotransferase family. RimO subfamily. [4Fe-4S] cluster is required as a cofactor.

The protein localises to the cytoplasm. It catalyses the reaction L-aspartate(89)-[ribosomal protein uS12]-hydrogen + (sulfur carrier)-SH + AH2 + 2 S-adenosyl-L-methionine = 3-methylsulfanyl-L-aspartate(89)-[ribosomal protein uS12]-hydrogen + (sulfur carrier)-H + 5'-deoxyadenosine + L-methionine + A + S-adenosyl-L-homocysteine + 2 H(+). Functionally, catalyzes the methylthiolation of an aspartic acid residue of ribosomal protein uS12. The polypeptide is Ribosomal protein uS12 methylthiotransferase RimO (Brucella anthropi (strain ATCC 49188 / DSM 6882 / CCUG 24695 / JCM 21032 / LMG 3331 / NBRC 15819 / NCTC 12168 / Alc 37) (Ochrobactrum anthropi)).